We begin with the raw amino-acid sequence, 158 residues long: MSSGSWSHEVAVNVAAGRMFKAAMLDWHNLGPKIVPDFIAGGSVVSGDGSVGTIREIKINNPAIPFSYVKERLDFVDHDKFEVKQTLVEGGGLGKMFECATTHFKFEPSSNGGCLVKVTASYKILPGVADESAKAKEGITNHMKATEAYLLANPTAYV.

This sequence belongs to the BetVI family.

It is found in the cytoplasm. This chain is Pathogenesis-related protein 1 (PR1), found in Asparagus officinalis (Garden asparagus).